The following is a 57-amino-acid chain: UPF0434 protein Spea_1772 (57 aa).

The protein belongs to the UPF0434 family.

The protein is UPF0434 protein Spea_1772 of Shewanella pealeana (strain ATCC 700345 / ANG-SQ1).